Here is a 761-residue protein sequence, read N- to C-terminus: BMP/retinoic acid-inducible neural-specific protein 1 (761 aa).

An N-terminal signal peptide occupies residues 1-19 (MNWRFVELLYFLFIWGRIS). The 184-residue stretch at 68-251 (RYKIYREFAR…FVQSALSYIM (184 aa)) folds into the MACPF domain. N-linked (GlcNAc...) asparagine glycosylation is found at Asn156, Asn433, Asn443, Asn553, Asn599, Asn631, and Asn677.

This sequence belongs to the BRINP family. In terms of tissue distribution, highly expressed in brain. Weakly expressed in heart, lung, skeletal muscle, kidney, thymus, prostate, testis and small intestine.

Its subcellular location is the cytoplasm. Its function is as follows. Plays a role in neurogenesis and brain development. May suppress cell cycle progression in postmitotic neurons by inhibiting G1/S transition. The chain is BMP/retinoic acid-inducible neural-specific protein 1 (BRINP1) from Homo sapiens (Human).